A 538-amino-acid chain; its full sequence is Syncytin-2 (538 aa).

A signal peptide spans 1-15; the sequence is MGLLLLVLILTPLLA. At 16–478 the chain is on the extracellular side; the sequence is AHRHPDFPLL…GWLNWEGTWK (463 aa). Positions 43-46 match the CXXC motif; it reads CWLC. Disulfide bonds link C43/C46, C43/C439, and C431/C438. N133, N146, N177, N220, N241, N247, N312, and N332 each carry an N-linked (GlcNAc...) asparagine glycan. Residues 354-374 form a fusion peptide region; sequence FIPLLAGLGIIAGTGTGIAGI. The CKS-17 signature appears at 414-430; the sequence is LQNRRGLDMLTAAQGGI. A CX6CC motif is present at residues 431-439; sequence CLALDEKCC. N-linked (GlcNAc...) asparagine glycosylation is present at N443. Residues 479-499 traverse the membrane as a helical segment; it reads WFSWVLPFTGPLVSLLLLLLF. Residues 500-538 are Cytoplasmic-facing; that stretch reads GPCLLNLITQFVLSRLQAIKLQTNLSAGCRPHNIQESPF.

It belongs to the gamma type-C retroviral envelope protein family. HERV class-I FRD env subfamily. The surface and transmembrane proteins form a heterodimer. They are attached by non-covalent interactions or by a labile interchain disulfide bond. Post-translationally, specific enzymatic cleavages in vivo yield the mature SU and TM proteins. In terms of processing, the CXXC motif is highly conserved across a broad range of retroviral envelope proteins. It is thought to participate in the formation of a labile disulfide bond possibly with the CX6CC motif present in the transmembrane protein.

It is found in the virion. The protein resides in the cell membrane. Functionally, this endogenous retroviral envelope protein has retained its original fusogenic properties and participates in trophoblast fusion and the formation of a syncytium during placenta morphogenesis. The interaction with MFSD2A is apparently important for this process. Endogenous envelope proteins may have kept, lost or modified their original function during evolution but this one can still make pseudotypes with MLV, HIV-1 or SIV-1 virions and confer infectivity. Retroviral envelope proteins mediate receptor recognition and membrane fusion during early infection. The surface protein mediates receptor recognition, while the transmembrane protein anchors the envelope heterodimer to the viral membrane through one transmembrane domain. The other hydrophobic domain, called fusion peptide, mediates fusion of the viral membrane with the target cell membrane. This Pongo pygmaeus (Bornean orangutan) protein is Syncytin-2 (ERVFRD-1).